A 226-amino-acid chain; its full sequence is Lysosomal-associated transmembrane protein 4B (226 aa).

Helical transmembrane passes span 26 to 46 (ILLG…LLSA), 72 to 92 (MCIA…ATYG), 100 to 120 (WIIP…LVAI), and 153 to 173 (CLVL…GYLI). The interval 205–221 (PPYDDATVNGAAKEPPP) is required for NEDD4 interaction.

The protein belongs to the LAPTM4/LAPTM5 transporter family. In terms of assembly, homooligomer; upon reaching the lysosomes. Interacts with MCOLN1. Interacts with NEDD4; may play a role in the lysosomal sorting of LAPTM4B; enhances HGS association with NEDD4; mediates inhibition of EGFR degradation. Interacts with PIP5K1C; promotes SNX5 association with LAPTM4B; kinase activity of PIP5K1C is required; interaction is regulated by phosphatidylinositol 4,5-bisphosphate generated by PIP5K1C. Interacts with HGS; promotes HGS ubiquitination. Interacts with SNX5. Interacts with SLC3A2 and SLC7A5; recruits SLC3A2 and SLC7A5 to lysosomes to promote leucine uptake into these organelles and is required for mTORC1 activation. Interacts with LRRC32; decreases TGFB1 production in regulatory T cells. Interacts with BECN1; competes with EGFR for LAPTM4B binding; regulates EGFR activity. Interacts with EGFR; positively correlates with EGFR activation. Post-translationally, undergoes proteolytic cleavage following delivery to the lysosomes. Ubiquitinated by NEDD4.

It localises to the endomembrane system. The protein resides in the late endosome membrane. Its subcellular location is the cell membrane. It is found in the cell projection. The protein localises to the lysosome membrane. It localises to the endosome membrane. The protein resides in the endosome. Its subcellular location is the multivesicular body membrane. It is found in the multivesicular body lumen. In terms of biological role, required for optimal lysosomal function. Blocks EGF-stimulated EGFR intraluminal sorting and degradation. Conversely by binding with the phosphatidylinositol 4,5-bisphosphate, regulates its PIP5K1C interaction, inhibits HGS ubiquitination and relieves LAPTM4B inhibition of EGFR degradation. Recruits SLC3A2 and SLC7A5 (the Leu transporter) to the lysosome, promoting entry of leucine and other essential amino acid (EAA) into the lysosome, stimulating activation of proton-transporting vacuolar (V)-ATPase protein pump (V-ATPase) and hence mTORC1 activation. Plays a role as negative regulator of TGFB1 production in regulatory T cells. Binds ceramide and facilitates its exit from late endosome in order to control cell death pathways. This Macaca fascicularis (Crab-eating macaque) protein is Lysosomal-associated transmembrane protein 4B.